Here is a 488-residue protein sequence, read N- to C-terminus: Ribulose bisphosphate carboxylase large chain (488 aa).

Positions 127 and 177 each coordinate substrate. Lys-179 acts as the Proton acceptor in catalysis. Lys-181 contacts substrate. Mg(2+) is bound by residues Lys-205, Asp-207, and Glu-208. Lys-205 carries the post-translational modification N6-carboxylysine. Catalysis depends on His-297, which acts as the Proton acceptor. Substrate contacts are provided by Arg-298, His-330, and Ser-382.

It belongs to the RuBisCO large chain family. Type I subfamily. In terms of assembly, heterohexadecamer of 8 large chains and 8 small chains. It depends on Mg(2+) as a cofactor.

It is found in the plastid. Its subcellular location is the chloroplast. It catalyses the reaction 2 (2R)-3-phosphoglycerate + 2 H(+) = D-ribulose 1,5-bisphosphate + CO2 + H2O. It carries out the reaction D-ribulose 1,5-bisphosphate + O2 = 2-phosphoglycolate + (2R)-3-phosphoglycerate + 2 H(+). Functionally, ruBisCO catalyzes two reactions: the carboxylation of D-ribulose 1,5-bisphosphate, the primary event in carbon dioxide fixation, as well as the oxidative fragmentation of the pentose substrate in the photorespiration process. Both reactions occur simultaneously and in competition at the same active site. The chain is Ribulose bisphosphate carboxylase large chain from Ectocarpus siliculosus (Brown alga).